We begin with the raw amino-acid sequence, 788 residues long: Integrin beta-6 (788 aa).

Positions 1–21 are cleaved as a signal peptide; it reads MGIELLCLFFLFLGRNDHVQG. The PSI domain occupies 22 to 71; it reads GCALGGAETCEDCLLIGPQCAWCAQENFTHPSGVGERCDTPANLLAKGCQ. The Extracellular portion of the chain corresponds to 22–709; sequence GCALGGAETC…KDCPKPPNIP (688 aa). 19 disulfides stabilise this stretch: Cys23-Cys41, Cys31-Cys454, Cys34-Cys59, Cys44-Cys70, Cys197-Cys204, Cys252-Cys293, Cys394-Cys406, Cys426-Cys452, Cys456-Cys476, Cys467-Cys479, Cys481-Cys490, Cys492-Cys519, Cys502-Cys517, Cys511-Cys522, Cys524-Cys537, Cys539-Cys560, Cys544-Cys558, Cys552-Cys563, and Cys565-Cys574. 2 N-linked (GlcNAc...) asparagine glycosylation sites follow: Asn48 and Asn97. A VWFA domain is found at 131–371; the sequence is YPVDLYYLMD…QLIISAYEEL (241 aa). Mg(2+) contacts are provided by Asp140, Ser142, and Ser144. Residues Ser144, Asp147, Asp148, and Glu179 each coordinate Ca(2+). Ca(2+)-binding residues include Asn235, Asp237, Pro239, and Glu240. Glu240 serves as a coordination point for Mg(2+). Asn260 is a glycosylation site (N-linked (GlcNAc...) asparagine). Positions 271 and 355 each coordinate Ca(2+). Residues Asn387 and Asn396 are each glycosylated (N-linked (GlcNAc...) asparagine). 4 consecutive I-EGF domains span residues 456 to 491, 492 to 538, 539 to 575, and 576 to 615; these read CQKE…PRCE, CGED…PYCQ, CDNF…EYCN, and CTTS…PTCE. N-linked (GlcNAc...) asparagine glycosylation is found at Asn463 and Asn471. The N-linked (GlcNAc...) asparagine glycan is linked to Asn541. An N-linked (GlcNAc...) asparagine glycan is attached at Asn575. 9 cysteine pairs are disulfide-bonded: Cys576/Cys599, Cys583/Cys597, Cys591/Cys602, Cys604/Cys614, Cys617/Cys620, Cys624/Cys670, Cys630/Cys649, Cys633/Cys645, and Cys678/Cys702. Residues 710–730 form a helical membrane-spanning segment; the sequence is MIMLGVSLAILLIGVVLLCIW. Residues 731–758 form an interaction with HAX1 region; that stretch reads KLLVSFHDRKEVAKFEAERSKAKWQTGT. Residues 731–788 are Cytoplasmic-facing; sequence KLLVSFHDRKEVAKFEAERSKAKWQTGTNPLYRGSTSTFKNVTYKHREKQKVDLSTDC.

The protein belongs to the integrin beta chain family. Heterodimer of an alpha and a beta subunit. Interacts with FLNB. Interacts with HAX1. ITGAV:ITGB6 interacts with FBN1. ITGAV:ITGB6 interacts with TGFB1. As to quaternary structure, (Microbial infection) Integrin ITGAV:ITGB6 interacts with coxsackievirus A9, coxsackievirus B1 capsid proteins. In terms of assembly, (Microbial infection) Integrin ITGAV:ITGB6 interacts with herpes simplex virus-1/HHV-1 gH:gL proteins.

The protein resides in the cell membrane. Its subcellular location is the cell junction. It is found in the focal adhesion. Functionally, integrin alpha-V:beta-6 (ITGAV:ITGB6) is a receptor for fibronectin and cytotactin. It recognizes the sequence R-G-D in its ligands. Internalization of integrin alpha-V/beta-6 via clathrin-mediated endocytosis promotes carcinoma cell invasion. ITGAV:ITGB6 acts as a receptor for fibrillin-1 (FBN1) and mediates R-G-D-dependent cell adhesion to FBN1. Integrin alpha-V:beta-6 (ITGAV:ITGB6) mediates R-G-D-dependent release of transforming growth factor beta-1 (TGF-beta-1) from regulatory Latency-associated peptide (LAP), thereby playing a key role in TGF-beta-1 activation. In terms of biological role, (Microbial infection) Integrin ITGAV:ITGB6 acts as a receptor for Coxsackievirus A9 and Coxsackievirus B1. (Microbial infection) Integrin ITGAV:ITGB6 acts as a receptor for Herpes simplex virus-1/HHV-1. In Homo sapiens (Human), this protein is Integrin beta-6 (ITGB6).